Here is a 156-residue protein sequence, read N- to C-terminus: Arginine repressor (156 aa).

Belongs to the ArgR family.

It localises to the cytoplasm. It participates in amino-acid biosynthesis; L-arginine biosynthesis [regulation]. Regulates arginine biosynthesis genes. The sequence is that of Arginine repressor from Photobacterium profundum (strain SS9).